We begin with the raw amino-acid sequence, 355 residues long: Receptor-like serine/threonine-protein kinase At1g78530 (355 aa).

Over 1 to 8 (MANAKETT) the chain is Extracellular. Residues 9-29 (FYITISVVAFVIGKIVIALLF) form a helical membrane-spanning segment. The Cytoplasmic portion of the chain corresponds to 30–355 (YKRWKRKHTI…YIKLSTRSSF (326 aa)). The Protein kinase domain maps to 75 to 347 (LSNKDILGSG…TEVVKLLEYI (273 aa)). Residues 81–89 (LGSGGFGTV) and Lys-103 each bind ATP. Tyr-148 carries the post-translational modification Phosphotyrosine. Asp-197 acts as the Proton acceptor in catalysis. Phosphoserine occurs at positions 201 and 230. 2 positions are modified to phosphothreonine: Thr-231 and Thr-236. At Tyr-244 the chain carries Phosphotyrosine.

It belongs to the protein kinase superfamily. Ser/Thr protein kinase family.

Its subcellular location is the cell membrane. The catalysed reaction is L-seryl-[protein] + ATP = O-phospho-L-seryl-[protein] + ADP + H(+). The enzyme catalyses L-threonyl-[protein] + ATP = O-phospho-L-threonyl-[protein] + ADP + H(+). In Arabidopsis thaliana (Mouse-ear cress), this protein is Receptor-like serine/threonine-protein kinase At1g78530.